The following is a 122-amino-acid chain: Large ribosomal subunit protein uL14 (122 aa).

It belongs to the universal ribosomal protein uL14 family. As to quaternary structure, part of the 50S ribosomal subunit. Forms a cluster with proteins L3 and L19. In the 70S ribosome, L14 and L19 interact and together make contacts with the 16S rRNA in bridges B5 and B8.

In terms of biological role, binds to 23S rRNA. Forms part of two intersubunit bridges in the 70S ribosome. The sequence is that of Large ribosomal subunit protein uL14 from Ruthia magnifica subsp. Calyptogena magnifica.